The chain runs to 974 residues: Toxin subunit YenC1 (974 aa).

9 RHS repeats span residues 165 to 179, 290 to 304, 322 to 336, 354 to 368, 398 to 412, 490 to 504, 570 to 584, 596 to 610, and 630 to 644; these read AGQC…GLNQ, GVLT…TQRL, FQDL…GNVL, VPEN…YQLV, NYIR…GNLM, SDSE…SQRV, NDEL…IGSS, SQEE…AVWM, and DATG…YYQP. Residues 600-680 are RHS-repeat associated core domain; it reads YYPYGGTAVW…PIVLHDPDGL (81 aa). The cytotoxic necrotising factor domain stretch occupies residues 699–940; that stretch reads ISSLKGTGPF…GEVSASTLLE (242 aa).

The protein belongs to the RHS family. Semipurified toxin complex consists of at least YenA1-YenA2-YenB-YenC1-YenC2-Chi1-Chi2. The Yen-TC:K9 subcomplex is about 26 nm tall and 22 nm in diameter with 5-fold symmetry and 5 copies of YenA1, YenA2, Chi1 and Chi2; the chitinase subunits may be solvent accessible on the exterior the complex. The Yen-TC:K9 subcomplex has no insecticidal activity. The native complex with additional YenB, YenC1 and YenC2 subunits is 16 nm taller and is insecticidal; the toxicity-conferring subunits are present at about 1 copy each.

Its subcellular location is the secreted. Its activity is regulated as follows. Toxin complex is secreted when grown at 25 degrees Celsius or less; at higher temperatures the proteins are present intracellularly but not secreted. Part of an orally active toxin complex (TC) with strong insecticidal effects on larvae of the Coleoptera Costelytra zealandica, Acrossidius tasmania and Adoryphorus couloni and some Lepidoptera larvae. The TC has an endochitinase activity. In Yersinia entomophaga, this protein is Toxin subunit YenC1.